The following is a 765-amino-acid chain: Membrane metallo-endopeptidase-like 1 (765 aa).

Over 1–19 (MVERAGWCRKKSPGFVEYG) the chain is Cytoplasmic. A helical; Signal-anchor for type II membrane protein membrane pass occupies residues 20 to 40 (LMVLLLLLLGAIVTLGVFYSI). Residues 41-765 (GKQLPLLTSL…MHPMKRCRIW (725 aa)) lie on the Lumenal side of the membrane. The Peptidase M13 domain occupies 74 to 765 (ICTTPSCVIA…MHPMKRCRIW (692 aa)). Cystine bridges form between Cys-75/Cys-80, Cys-98/Cys-750, Cys-106/Cys-710, Cys-161/Cys-425, and Cys-636/Cys-762. Arg-121 is a binding site for a peptide. Asn-163, Asn-279, Asn-303, and Asn-336 each carry an N-linked (GlcNAc...) asparagine glycan. Residues 523–549 (FENGLQNLKNNAQRSLKKLREKVDQNL) adopt a coiled-coil conformation. A Zn(2+)-binding site is contributed by His-599. The active site involves Glu-600. His-603 and Glu-662 together coordinate Zn(2+). Asp-666 acts as the Proton donor in catalysis. N-linked (GlcNAc...) asparagine glycosylation occurs at Asn-694.

The protein belongs to the peptidase M13 family. Requires Zn(2+) as cofactor. Post-translationally, N-glycosylated. As to expression, highly expressed in testis. Also expressed in ovary. Weakly or not expressed in brain, lung, heart, liver, kidney, adrenal gland and intestine.

The protein resides in the membrane. It is found in the secreted. It catalyses the reaction Preferential cleavage of polypeptides between hydrophobic residues, particularly with Phe or Tyr at P1'.. Inhibited by thiorphan and phosphoramidon. Functionally, metalloprotease involved in sperm function, possibly by modulating the processes of fertilization and early embryonic development. Degrades a broad variety of small peptides with a preference for peptides shorter than 3 kDa containing neutral bulky aliphatic or aromatic amino acid residues. Shares the same substrate specificity with MME and cleaves peptides at the same amide bond. This Mus musculus (Mouse) protein is Membrane metallo-endopeptidase-like 1 (Mmel1).